The following is a 272-amino-acid chain: Ras-related protein RSR1 (272 aa).

10-17 (GAGGVGKS) contacts GTP. The short motif at 32–40 (YDPTIEDSY) is the Effector region element. Residues 57–61 (DTAGI) and 116–119 (NKAD) each bind GTP. Residues 177–272 (DARNQSQQFS…KKNASTCTIL (96 aa)) form a disordered region. Composition is skewed to polar residues over residues 180–232 (NQSQ…STPV) and 245–258 (SGSSNRTGISATSQ). Cysteine 269 carries the cysteine methyl ester modification. Residue cysteine 269 is the site of S-geranylgeranyl cysteine attachment. The propeptide at 270–272 (TIL) is removed in mature form.

The protein belongs to the small GTPase superfamily. Ras family.

The protein resides in the cell membrane. It catalyses the reaction GTP + H2O = GDP + phosphate + H(+). Alternates between an inactive form bound to GDP and an active form bound to GTP. Activated by a guanine nucleotide-exchange factor (GEF) and inactivated by a GTPase-activating protein (GAP). Its function is as follows. Ras-related protein which binds GDP/GTP and possesses intrinsic GTPase activity. Involved in development of cell polarity during the cell division cycle, and essential for bud emergence. In Saccharomyces cerevisiae (strain ATCC 204508 / S288c) (Baker's yeast), this protein is Ras-related protein RSR1.